Here is a 907-residue protein sequence, read N- to C-terminus: Alanine--tRNA ligase (907 aa).

Zn(2+) is bound by residues H581, H585, C683, and H687.

Belongs to the class-II aminoacyl-tRNA synthetase family. It depends on Zn(2+) as a cofactor.

It is found in the cytoplasm. The enzyme catalyses tRNA(Ala) + L-alanine + ATP = L-alanyl-tRNA(Ala) + AMP + diphosphate. Its function is as follows. Catalyzes the attachment of alanine to tRNA(Ala) in a two-step reaction: alanine is first activated by ATP to form Ala-AMP and then transferred to the acceptor end of tRNA(Ala). Also edits incorrectly charged Ser-tRNA(Ala) and Gly-tRNA(Ala) via its editing domain. The chain is Alanine--tRNA ligase from Bdellovibrio bacteriovorus (strain ATCC 15356 / DSM 50701 / NCIMB 9529 / HD100).